The following is a 165-amino-acid chain: Protein SprT (165 aa).

Residues Leu22–Val163 enclose the SprT-like domain. Residue His78 participates in Zn(2+) binding. Glu79 is an active-site residue. His82 is a binding site for Zn(2+).

This sequence belongs to the SprT family. The cofactor is Zn(2+).

It is found in the cytoplasm. This chain is Protein SprT, found in Salmonella paratyphi A (strain ATCC 9150 / SARB42).